We begin with the raw amino-acid sequence, 264 residues long: 3-methyl-2-oxobutanoate hydroxymethyltransferase (264 aa).

Residues Asp-45 and Asp-84 each coordinate Mg(2+). 3-methyl-2-oxobutanoate contacts are provided by residues Asp-45–Ser-46, Asp-84, and Lys-112. Glu-114 is a Mg(2+) binding site. The active-site Proton acceptor is Glu-181.

It belongs to the PanB family. In terms of assembly, homodecamer; pentamer of dimers. The cofactor is Mg(2+).

The protein localises to the cytoplasm. The catalysed reaction is 3-methyl-2-oxobutanoate + (6R)-5,10-methylene-5,6,7,8-tetrahydrofolate + H2O = 2-dehydropantoate + (6S)-5,6,7,8-tetrahydrofolate. Its pathway is cofactor biosynthesis; (R)-pantothenate biosynthesis; (R)-pantoate from 3-methyl-2-oxobutanoate: step 1/2. In terms of biological role, catalyzes the reversible reaction in which hydroxymethyl group from 5,10-methylenetetrahydrofolate is transferred onto alpha-ketoisovalerate to form ketopantoate. The polypeptide is 3-methyl-2-oxobutanoate hydroxymethyltransferase (Psychromonas ingrahamii (strain DSM 17664 / CCUG 51855 / 37)).